The sequence spans 478 residues: Solute carrier family 49 member 4 (478 aa).

The tract at residues 1–27 (MGSGWSSEEEERQPLLGPGLGPAPGAA) is disordered. Residues 1-51 (MGSGWSSEEEERQPLLGPGLGPAPGAARRGREATAVLPAAGPNPGRVYGRR) lie on the Cytoplasmic side of the membrane. The short motif at 15 to 16 (LL) is the Di-leucine motif; mediates lysosomal localization element. A helical membrane pass occupies residues 52 to 72 (WLVLLLFSLLAFAQGLVWNTW). Over 73-89 (GPIQNSARQAYGFSGWD) the chain is Lumenal. Residues 90 to 110 (IALLVLWGPIGFLPCFAFMWL) form a helical membrane-spanning segment. Residues 111–117 (LDKRGLR) are Cytoplasmic-facing. The helical transmembrane segment at 118–138 (VTVLLTSFLMVLGTGLRCIPV) threads the bilayer. The Lumenal segment spans residues 139–152 (SDLALKKRLIHGGQ). The helical transmembrane segment at 153–173 (ILNGLAGPTVMNAAPFLSTTW) threads the bilayer. The Cytoplasmic segment spans residues 174 to 184 (FSADERATATA). Residues 185-205 (IASMLSYLGGACAFLVGPLVV) traverse the membrane as a helical segment. The Lumenal portion of the chain corresponds to 206-229 (PAPNGTAPLLAAESSRAHIKDRIE). Residue N209 is glycosylated (N-linked (GlcNAc...) asparagine). The helical transmembrane segment at 230 to 250 (TVLYAEFGVVCLIFSATLAYF) threads the bilayer. Residues 251 to 281 (PPRPPLPPSVAAASQRLSYRRSFCRLLSNLR) lie on the Cytoplasmic side of the membrane. A helical transmembrane segment spans residues 282–302 (FLMIALAYAIPLGVFAGWSGV). Topologically, residues 303–314 (LDLILTPVHVSQ) are lumenal. A helical transmembrane segment spans residues 315–335 (VDAGWIGFWSIVGGCVVGIAM). Residues 336–347 (ARFADFIRGMLK) are Cytoplasmic-facing. A helical membrane pass occupies residues 348-368 (LILLLLFSGATLSSTWFTLTC). Residues 369–384 (LNSITHLPLTTVTLYA) are Lumenal-facing. The chain crosses the membrane as a helical span at residues 385–405 (SCILLGVFLNSSVPIFFELFV). At 406–414 (ETVYPVPEG) the chain is on the cytoplasmic side. The helical transmembrane segment at 415–435 (ITCGVVTFLSNMFMGVLLFFV) threads the bilayer. The Lumenal portion of the chain corresponds to 436-442 (TFYHTEL). Residues 443 to 463 (SWFNWCLPGSCLLSLLLILCF) form a helical membrane-spanning segment. Residues 464 to 478 (RESYDRLYLDVVVSV) are Cytoplasmic-facing.

This sequence belongs to the major facilitator superfamily. In terms of processing, cleaved in lysosomes by cathepsin L between Leu-214 and Ala-261, generating a N-glycosylated N-terminal and a non-glycosylated C-terminal fragment.

The protein localises to the lysosome membrane. The catalysed reaction is pyridoxine(out) + n H(+)(out) = pyridoxine(in) + n H(+)(in). Mediates H(+)-dependent pyridoxine transport. The sequence is that of Solute carrier family 49 member 4 (Slc49a4) from Mus musculus (Mouse).